Reading from the N-terminus, the 1444-residue chain is RNA-directed RNA polymerase P1 (1444 aa).

Positions 157–181 (EEIQMDESQSDKRRRKKRMEKSRPV) are disordered. A RdRp catalytic domain is found at 690–897 (LGVGFATLYQ…KTVISHISGE (208 aa)).

Belongs to the reoviridae RNA-directed RNA polymerase family.

It localises to the virion. The protein resides in the host cytoplasm. It carries out the reaction RNA(n) + a ribonucleoside 5'-triphosphate = RNA(n+1) + diphosphate. Functionally, RNA-directed RNA polymerase that is involved in both transcription and genome replication. Together with the capping enzyme P5 and protein P7, forms an enzyme complex positioned near the channels situated at each of the five-fold vertices of the core. In Rice dwarf virus (isolate Akita) (RDV), this protein is RNA-directed RNA polymerase P1.